The following is a 240-amino-acid chain: Peptidyl-tRNA hydrolase 2 (240 aa).

TRNA is bound at residue Tyr60. His65 functions as the Proton acceptor in the catalytic mechanism. TRNA-binding residues include Tyr111, Asn113, and Asn159.

The protein belongs to the PTH family. As to quaternary structure, monomer.

The protein localises to the cytoplasm. The catalysed reaction is an N-acyl-L-alpha-aminoacyl-tRNA + H2O = an N-acyl-L-amino acid + a tRNA + H(+). Functionally, hydrolyzes ribosome-free peptidyl-tRNAs (with 1 or more amino acids incorporated), which drop off the ribosome during protein synthesis, or as a result of ribosome stalling. In terms of biological role, catalyzes the release of premature peptidyl moieties from peptidyl-tRNA molecules trapped in stalled 50S ribosomal subunits, and thus maintains levels of free tRNAs and 50S ribosomes. In Corynebacterium jeikeium (strain K411), this protein is Peptidyl-tRNA hydrolase 2.